Reading from the N-terminus, the 416-residue chain is Phosphoglycerate kinase (416 aa).

Residues Val23, Asp24, Phe25, Asn26, Gln38, Arg39, Ser62, His63, Gly65, Arg66, Leu121, Arg122, His169, and Arg170 each contribute to the (2R)-3-phosphoglycerate site. Gly213 provides a ligand contact to ADP. Gly213 is a CDP binding site. Residues Ala214 and Lys215 each contribute to the AMP site. Ala214 serves as a coordination point for ATP. Ala214 contacts Mg(2+). A CDP-binding site is contributed by Asp218. Mg(2+) is bound at residue Asp218. An AMP-binding site is contributed by Lys219. Lys219 serves as a coordination point for ATP. Gly237 serves as a coordination point for ADP. Gly237 provides a ligand contact to CDP. The AMP site is built by Gly238 and Gly312. Residues Gly238 and Gly312 each coordinate ATP. The CDP site is built by Gly337, Ala339, and Phe342. Phe342 lines the ADP pocket. Position 343 (Glu343) interacts with AMP. Positions 343, 374, and 375 each coordinate ATP. Asp374 is a binding site for Mg(2+).

This sequence belongs to the phosphoglycerate kinase family. In terms of assembly, monomer. The cofactor is Mg(2+).

It is found in the cytoplasm. The protein resides in the mitochondrion. It carries out the reaction (2R)-3-phosphoglycerate + ATP = (2R)-3-phospho-glyceroyl phosphate + ADP. It functions in the pathway carbohydrate degradation; glycolysis; pyruvate from D-glyceraldehyde 3-phosphate: step 2/5. Catalyzes one of the two ATP producing reactions in the glycolytic pathway via the reversible conversion of 1,3-diphosphoglycerate to 3-phosphoglycerate. Both L- and D- forms of purine and pyrimidine nucleotides can be used as substrates, but the activity is much lower on pyrimidines. Negatively regulates the biosynthesis of acetyl-CoA from pyruvate in the mitochondrion. This chain is Phosphoglycerate kinase (PGK), found in Funneliformis mosseae (Endomycorrhizal fungus).